The sequence spans 340 residues: Uroporphyrinogen decarboxylase (340 aa).

Substrate-binding positions include 21–25 (RQAGR), Asp71, Tyr148, Ser203, and His316.

The protein belongs to the uroporphyrinogen decarboxylase family. Homodimer.

It localises to the cytoplasm. The catalysed reaction is uroporphyrinogen III + 4 H(+) = coproporphyrinogen III + 4 CO2. It participates in porphyrin-containing compound metabolism; protoporphyrin-IX biosynthesis; coproporphyrinogen-III from 5-aminolevulinate: step 4/4. Its function is as follows. Catalyzes the decarboxylation of four acetate groups of uroporphyrinogen-III to yield coproporphyrinogen-III. This Campylobacter hominis (strain ATCC BAA-381 / DSM 21671 / CCUG 45161 / LMG 19568 / NCTC 13146 / CH001A) protein is Uroporphyrinogen decarboxylase.